A 247-amino-acid chain; its full sequence is NAD-dependent protein deacetylase (247 aa).

Positions M1–Y247 constitute a Deacetylase sirtuin-type domain. NAD(+) is bound by residues A23, T27, F34, R35, Q104, I106, D107, and H122. F34 lines the nicotinamide pocket. 2 residues coordinate nicotinamide: I106 and D107. H122 serves as the catalytic Proton acceptor. The Zn(2+) site is built by C130, C133, C152, and C155. Residues T193, S194, N216, and I234 each contribute to the NAD(+) site.

This sequence belongs to the sirtuin family. Class U subfamily. It depends on Zn(2+) as a cofactor.

The protein resides in the cytoplasm. It carries out the reaction N(6)-acetyl-L-lysyl-[protein] + NAD(+) + H2O = 2''-O-acetyl-ADP-D-ribose + nicotinamide + L-lysyl-[protein]. NAD-dependent protein deacetylase which modulates the activities of several enzymes which are inactive in their acetylated form. The sequence is that of NAD-dependent protein deacetylase from Clostridium tetani (strain Massachusetts / E88).